We begin with the raw amino-acid sequence, 165 residues long: 2-C-methyl-D-erythritol 2,4-cyclodiphosphate synthase (165 aa).

Residues aspartate 12 and histidine 14 each contribute to the a divalent metal cation site. 4-CDP-2-C-methyl-D-erythritol 2-phosphate is bound by residues 12–14 (DIH) and 38–39 (HS). Residue histidine 46 coordinates a divalent metal cation. 4-CDP-2-C-methyl-D-erythritol 2-phosphate-binding positions include 60–62 (DIG), 136–139 (TTNE), and arginine 146.

This sequence belongs to the IspF family. Homotrimer. A divalent metal cation is required as a cofactor.

The catalysed reaction is 4-CDP-2-C-methyl-D-erythritol 2-phosphate = 2-C-methyl-D-erythritol 2,4-cyclic diphosphate + CMP. It participates in isoprenoid biosynthesis; isopentenyl diphosphate biosynthesis via DXP pathway; isopentenyl diphosphate from 1-deoxy-D-xylulose 5-phosphate: step 4/6. Its function is as follows. Involved in the biosynthesis of isopentenyl diphosphate (IPP) and dimethylallyl diphosphate (DMAPP), two major building blocks of isoprenoid compounds. Catalyzes the conversion of 4-diphosphocytidyl-2-C-methyl-D-erythritol 2-phosphate (CDP-ME2P) to 2-C-methyl-D-erythritol 2,4-cyclodiphosphate (ME-CPP) with a corresponding release of cytidine 5-monophosphate (CMP). This chain is 2-C-methyl-D-erythritol 2,4-cyclodiphosphate synthase, found in Nostoc sp. (strain PCC 7120 / SAG 25.82 / UTEX 2576).